A 135-amino-acid chain; its full sequence is Large ribosomal subunit protein eL32 (135 aa).

Belongs to the eukaryotic ribosomal protein eL32 family.

The sequence is that of Large ribosomal subunit protein eL32 from Methanococcus maripaludis (strain C7 / ATCC BAA-1331).